A 58-amino-acid chain; its full sequence is uncharacterized protein (58 aa).

The helical transmembrane segment at 12–32 (VMTLLITISILIVLAVLLVTI) threads the bilayer.

The protein resides in the cell membrane. This is an uncharacterized protein from Bacillus subtilis (strain 168).